A 94-amino-acid chain; its full sequence is Defensin-like protein 21 (94 aa).

An N-terminal signal peptide occupies residues 1–26 (MVRTNVVSFVLFAAIVLCIGSIQIDG). 4 disulfides stabilise this stretch: cysteine 41/cysteine 92, cysteine 51/cysteine 79, cysteine 65/cysteine 88, and cysteine 69/cysteine 90.

The protein belongs to the DEFL family.

It is found in the secreted. This Arabidopsis thaliana (Mouse-ear cress) protein is Defensin-like protein 21.